The primary structure comprises 271 residues: Regulatory protein RecX (271 aa).

It belongs to the RecX family.

Its subcellular location is the cytoplasm. Modulates RecA activity. The polypeptide is Regulatory protein RecX (Geobacillus sp. (strain WCH70)).